Consider the following 761-residue polypeptide: uncharacterized protein (761 aa).

The CR-type zinc-finger motif lies at 1–84; that stretch reads MIVKCPICDG…CGGSGKVVKC (84 aa). The S1 motif domain maps to 135–200; that stretch reads GKFYKGVVTR…EKREIDFKYI (66 aa).

This is an uncharacterized protein from Methanocaldococcus jannaschii (strain ATCC 43067 / DSM 2661 / JAL-1 / JCM 10045 / NBRC 100440) (Methanococcus jannaschii).